The chain runs to 810 residues: Fibroblast growth factor receptor 1-A (810 aa).

The N-terminal stretch at 1 to 26 is a signal peptide; the sequence is MKMMMIMKTTLLLISVLLTQALQSQG. The Extracellular portion of the chain corresponds to 27 to 363; the sequence is RPAIQDEAPA…TQLPNQTYLE (337 aa). 3 Ig-like C2-type domains span residues 28–115, 147–235, and 244–346; these read PAIQ…FNIS, PDKM…YQLD, and PILQ…AWLT. Cysteines 53 and 99 form a disulfide. N-linked (GlcNAc...) asparagine glycans are attached at residues asparagine 107, asparagine 113, asparagine 216, asparagine 229, asparagine 253, asparagine 285, asparagine 306, asparagine 319, and asparagine 358. Residues cysteine 167 and cysteine 219 are joined by a disulfide bond. An intrachain disulfide couples cysteine 266 to cysteine 330. The helical transmembrane segment at 364-384 threads the bilayer; sequence VLIYCVGFFLICVMVGTAVLA. Topologically, residues 385 to 810 are cytoplasmic; it reads KMHSSAKKSD…PNRGVAFKKR (426 aa). A Phosphotyrosine; by autocatalysis modification is found at tyrosine 450. The 290-residue stretch at 465 to 754 folds into the Protein kinase domain; the sequence is LVLGKPLGEG…LSMTSNQEYL (290 aa). Residues 471–477, lysine 501, 549–551, and asparagine 555 contribute to the ATP site; these read LGEGCFG and EFA. 2 positions are modified to phosphotyrosine; by autocatalysis: tyrosine 570 and tyrosine 572. Catalysis depends on aspartate 610, which acts as the Proton acceptor. The ATP site is built by arginine 614 and aspartate 628. Tyrosine 640, tyrosine 641, tyrosine 717, and tyrosine 753 each carry phosphotyrosine; by autocatalysis. Residues 787–810 are disordered; it reads AGADEPCLPKFPPHPNRGVAFKKR.

This sequence belongs to the protein kinase superfamily. Tyr protein kinase family. Fibroblast growth factor receptor subfamily. Monomer. Homodimer after ligand binding. Interacts with cnpy1. Post-translationally, autophosphorylated. Binding of FGF family members together with heparan sulfate proteoglycan or heparin promotes receptor dimerization and autophosphorylation on tyrosine residues. Autophosphorylation occurs in trans between the two FGFR molecules present in the dimer and proceeds in a highly ordered manner. Phosphotyrosine residues provide docking sites for interacting proteins and so are crucial for FGFR1 function and its regulation. Ubiquitinated. FGFR1 is rapidly ubiquitinated after autophosphorylation, leading to internalization and degradation. In terms of processing, N-glycosylated in the endoplasmic reticulum. The N-glycan chains undergo further maturation to an Endo H-resistant form in the Golgi apparatus. Initially expressed in adaxial mesoderm with transcripts distinctly localized to the anterior portion of each half-somite. Hereupon, also strongly expressed in the otic vesicles, branchial arches and the brain, especially at the midbrain-hindbrain boundary (MHB).

It is found in the cell membrane. The protein resides in the nucleus. Its subcellular location is the cytoplasm. It localises to the cytosol. The protein localises to the cytoplasmic vesicle. The enzyme catalyses L-tyrosyl-[protein] + ATP = O-phospho-L-tyrosyl-[protein] + ADP + H(+). Its activity is regulated as follows. Present in an inactive conformation in the absence of bound ligand. Ligand binding leads to dimerization and activation by sequential autophosphorylation on tyrosine residues. Functionally, tyrosine-protein kinase that acts as a cell-surface receptor for fibroblast growth factors and plays an essential role in the regulation of embryonic development, cell proliferation, differentiation and migration. Required for normal mesoderm patterning and normal skeletogenesis. Phosphorylates PLCG1, FRS2, GAB1 and SHB. Ligand binding leads to the activation of several signaling cascades. Activation of PLCG1 leads to the production of the cellular signaling molecules diacylglycerol and inositol-1,4,5-trisphosphate. Phosphorylation of FRS2 triggers recruitment of GRB2, GAB1, PIK3R1 and SOS1, and mediates activation of RAS, MAPK1/ERK2, MAPK3/ERK1 and the MAP kinase signaling pathway, as well as of the AKT1 signaling pathway. Promotes phosphorylation of SHC1, STAT1 and PTPN11/SHP2. In the nucleus, enhances RPS6KA1 and CREB1 activity and contributes to the regulation of transcription. FGFR1 signaling is down-regulated by ubiquitination, internalization and degradation. The polypeptide is Fibroblast growth factor receptor 1-A (fgfr1a) (Danio rerio (Zebrafish)).